The following is a 31-amino-acid chain: U2-theraphotoxin-Hhn1a (31 aa).

Intrachain disulfides connect Cys-2/Cys-14, Cys-7/Cys-19, and Cys-13/Cys-26.

As to expression, expressed by the venom gland.

The protein localises to the secreted. Functionally, agglutinates erythrocytes. The sequence is that of U2-theraphotoxin-Hhn1a from Cyriopagopus hainanus (Chinese bird spider).